The sequence spans 369 residues: Histidine decarboxylase (369 aa).

His-119 contributes to the substrate binding site. An N6-(pyridoxal phosphate)lysine modification is found at Lys-230.

Belongs to the group II decarboxylase family. As to quaternary structure, homotetramer. Requires pyridoxal 5'-phosphate as cofactor.

It catalyses the reaction L-histidine + H(+) = histamine + CO2. This Mesorhizobium japonicum (strain LMG 29417 / CECT 9101 / MAFF 303099) (Mesorhizobium loti (strain MAFF 303099)) protein is Histidine decarboxylase.